The sequence spans 173 residues: Lipoprotein signal peptidase (173 aa).

3 helical membrane passes run 11-31 (FGLIFAAVAFLLDQVTKWIVT), 69-89 (TTRWTLVAVTGIVAAAVAFWM), and 93-113 (QAKGDVIALALILGGALGNIV). Catalysis depends on residues Asp-123 and Asp-142. A helical transmembrane segment spans residues 134–154 (PFMIFNVADACITIGVLLLVA).

It belongs to the peptidase A8 family.

It is found in the cell inner membrane. It carries out the reaction Release of signal peptides from bacterial membrane prolipoproteins. Hydrolyzes -Xaa-Yaa-Zaa-|-(S,diacylglyceryl)Cys-, in which Xaa is hydrophobic (preferably Leu), and Yaa (Ala or Ser) and Zaa (Gly or Ala) have small, neutral side chains.. Its pathway is protein modification; lipoprotein biosynthesis (signal peptide cleavage). Functionally, this protein specifically catalyzes the removal of signal peptides from prolipoproteins. In Sphingopyxis alaskensis (strain DSM 13593 / LMG 18877 / RB2256) (Sphingomonas alaskensis), this protein is Lipoprotein signal peptidase.